The following is a 304-amino-acid chain: Calcium release-activated calcium channel protein 1 (304 aa).

The span at 1–11 shows a compositional bias: pro residues; sequence MHPEPAPPPSH. A disordered region spans residues 1 to 50; that stretch reads MHPEPAPPPSHSNPELPVSGGSSTSGSRRSRRRSGDGEPSGAPPLPPPPP. The Cytoplasmic portion of the chain corresponds to 1-89; sequence MHPEPAPPPS…KLYLSRAKLK (89 aa). The segment at 3–49 is required for generation of inwardly rectifying CRAC currents; sequence PEPAPPPSHSNPELPVSGGSSTSGSRRSRRRSGDGEPSGAPPLPPPP. Residues 12–27 show a composition bias toward low complexity; the sequence is SNPELPVSGGSSTSGS. The segment at 39–61 is AKAP5 association region; the sequence is PSGAPPLPPPPPAVSYPDWIGQS. The segment covering 41-50 has biased composition (pro residues); that stretch reads GAPPLPPPPP. Residues 72–92 are interaction with STIM1; it reads SMQALSWRKLYLSRAKLKASS. A helical membrane pass occupies residues 90 to 107; that stretch reads ASSRTSALLSGFAMVAMV. At 108-121 the chain is on the extracellular side; it reads EVQLDTDHDYPPGL. A helical membrane pass occupies residues 122–142; the sequence is LIVFSACTTVLVAVHLFALMI. Residues 143-175 are Cytoplasmic-facing; the sequence is STCILPNIEAVSNVHNLNSVKESPHERMHRHIE. The chain crosses the membrane as a helical span at residues 176–196; the sequence is LAWAFSTVIGTLLFLAEVVLL. At 197–237 the chain is on the extracellular side; that stretch reads CWVKFLPLKRQAGQPSPTKPPAESVIVANHSDSSGITPGEA. Asn225 is a glycosylation site (N-linked (GlcNAc...) asparagine). A helical transmembrane segment spans residues 238-258; the sequence is AAIASTAIMVPCGLVFIVFAV. The Cytoplasmic portion of the chain corresponds to 259 to 304; sequence HFYRSLVSHKTDRQFQELNELAEFARLQDQLDHRGDHSLTPGTHYA. The interval 275 to 295 is interaction with STIM1; it reads ELNELAEFARLQDQLDHRGDH. The residue at position 298 (Thr298) is a Phosphothreonine.

It belongs to the Orai family. In terms of assembly, oligomerizes in homomeric and heteromeric ORAI complexes. Native CRAC channels most likely consist of hexameric ORAI heteromers, implying that diverse ORAI1, ORAI2 and ORAI3 subunit combinations with distinct biophysical properties can operate in a cell-type specific way. ARC channels are heteropentamers consisting of three ORAI1 and two ORAI3 subunits. Interacts with STIM1 and STIM2; this regulates channel activity. Interacts with CALM; this may displace STIM1 and STIM2 and might thereby modulate channel activity. Interacts (via N-terminus) with AKAP5 upon store depletion. Interacts with CRACR2A/EFCAB4B; the interaction is direct and takes place in absence of Ca(2+). Forms a complex with CRACR2A/EFCAB4B and STIM1 at low concentration of Ca(2+), the complex dissociates at elevated Ca(2+) concentrations. Interacts with ASPH (isoform 8). Interacts with SLC35G1. Interacts with UBQLN1. Interacts with ADCY8; interaction is calcium store depletion independent; interaction occurs in membrane raft; interaction increases markedly after store depletion; positively regulates SOCE-induced adenylate cyclase activity; contributes to the targeting of ADCY8 to discrete regions of the plasma membrane that are shielded from other calcium events. Interacts with EFHB; the interaction takes place upon Ca(2+)-store depletion. Interacts (via N- and C-termini) with ATP2C2 (via N-terminus); this interaction regulates Ca(2+) influx at the plasma membrane. Interacts with TSPAN18; this interaction regulates ORAI1 exit from the endoplasmic (ER), and/or Golgi, and trafficking to the cell surface. N-glycosylated. N-glycosylation inhibits channel activity in T cells. In terms of processing, ubiquitinated. Post-translationally, cys-195 is oxidated, leading to inactivation of channel activity. Expressed in lactating mammary epithelium (at protein level).

Its subcellular location is the cell membrane. It localises to the basolateral cell membrane. It carries out the reaction Ca(2+)(in) = Ca(2+)(out). Its activity is regulated as follows. Oxidation at Cys-197 leads to inactivation of channel activity. Functionally, pore-forming subunit of two major inward rectifying Ca(2+) channels at the plasma membrane: Ca(2+) release-activated Ca(2+) (CRAC) channels and arachidonate-regulated Ca(2+)-selective (ARC) channels. Assembles with ORAI2 and ORAI3 to form hexameric CRAC channels that mediate Ca(2+) influx upon depletion of endoplasmic reticulum Ca(2+) store and channel activation by Ca(2+) sensor STIM1, a process known as store-operated Ca(2+) entry (SOCE). Various pore subunit combinations may account for distinct CRAC channel spatiotemporal and cell-type specific dynamics. ORAI1 mainly contributes to the generation of Ca(2+) plateaus involved in sustained Ca(2+) entry and is dispensable for cytosolic Ca(2+) oscillations, whereas ORAI2 and ORAI3 generate oscillatory patterns. CRAC channels assemble in Ca(2+) signaling microdomains where Ca(2+) influx is coupled to calmodulin and calcineurin signaling and activation of NFAT transcription factors recruited to ORAI1 via AKAP5. Activates NFATC2/NFAT1 and NFATC3/NFAT4-mediated transcriptional responses. CRAC channels are the main pathway for Ca(2+) influx in T cells and promote the immune response to pathogens by activating NFAT-dependent cytokine and chemokine transcription. Assembles with ORAI3 to form channels that mediate store-independent Ca(2+) influx in response to inflammatory metabolites arachidonate or its derivative leukotriene C4, termed ARC and LRC channels respectively. Plays a prominent role in Ca(2+) influx at the basolateral membrane of mammary epithelial cells independently of the Ca(2+) content of endoplasmic reticulum or Golgi stores. May mediate transepithelial transport of large quantities of Ca(2+) for milk secretion. The polypeptide is Calcium release-activated calcium channel protein 1 (Orai1) (Mus musculus (Mouse)).